Reading from the N-terminus, the 309-residue chain is tRNA pseudouridine synthase B (309 aa).

Aspartate 51 (nucleophile) is an active-site residue.

This sequence belongs to the pseudouridine synthase TruB family. Type 1 subfamily.

It catalyses the reaction uridine(55) in tRNA = pseudouridine(55) in tRNA. Its function is as follows. Responsible for synthesis of pseudouridine from uracil-55 in the psi GC loop of transfer RNAs. The protein is tRNA pseudouridine synthase B of Coxiella burnetii (strain Dugway 5J108-111).